Reading from the N-terminus, the 134-residue chain is Terepressin/terephysin (134 aa).

A signal peptide spans 1–33 (MKCSVLQMSRLSWTACVLLLPLLLLTLQGGVQG). Cys34 and Cys39 form a disulfide bridge. Residues 44 to 50 (KRAVDSV) constitute a propeptide that is removed on maturation. 7 cysteine pairs are disulfide-bonded: Cys56-Cys100, Cys59-Cys73, Cys67-Cys90, Cys74-Cys80, Cys107-Cys121, Cys115-Cys133, and Cys122-Cys127.

This sequence belongs to the vasopressin/oxytocin family. Post-translationally, contains 7 disulfide bonds. In terms of tissue distribution, expressed by the venom duct.

The protein resides in the secreted. This Terebra anilis (Auger snail) protein is Terepressin/terephysin.